The chain runs to 203 residues: Bone marrow stromal antigen 2 (203 aa).

Residues 1–26 (MAPTFYHYHPLPMDQKEPGCGIRWRC) are Cytoplasmic-facing. A helical; Signal-anchor for type II membrane protein transmembrane segment spans residues 27 to 47 (LAAASVLILVALVIPLIIFAV). The Extracellular segment spans residues 48–183 (KANSEACRDG…EASITSKQNS (136 aa)). 2 N-linked (GlcNAc...) asparagine glycosylation sites follow: Asn66 and Asn93. Positions 66–178 (NTTRLLQRQL…LRTAEEASIT (113 aa)) form a coiled coil. Ser183 carries the GPI-anchor amidated serine lipid modification. Residues 184-203 (AGSMAVSSLLVLAVPLFLLF) constitute a propeptide, removed in mature form.

As to quaternary structure, parallel homodimer; disulfide-linked. May form homotetramers under reducing conditions. Isoform 1 and isoform 2 form homodimers and also heterodimers with each other. Dimerization is essential for its antiviral activity. Interacts (via cytoplasmic domain) with ARHGAP44. Interacts with MMP14 (via C-terminal cytoplasmic tail). Interacts with LILRA4/ILT7. Interacts with RNF115. In terms of processing, the GPI anchor is essential for its antiviral activity.

The protein localises to the golgi apparatus. Its subcellular location is the trans-Golgi network. It localises to the cell membrane. The protein resides in the late endosome. It is found in the membrane raft. The protein localises to the cytoplasm. Its subcellular location is the apical cell membrane. In terms of biological role, IFN-induced antiviral host restriction factor which efficiently blocks the release of diverse mammalian enveloped viruses by directly tethering nascent virions to the membranes of infected cells. Acts as a direct physical tether, holding virions to the cell membrane and linking virions to each other. The tethered virions can be internalized by endocytosis and subsequently degraded or they can remain on the cell surface. In either case, their spread as cell-free virions is restricted. Its target viruses belong to diverse families, including retroviridae: human immunodeficiency virus type 1 (HIV-1), mouse mammary tumor virus (MMTV) and murine leukemia virus (MLV), filoviridae: ebola virus (EBOV), arenaviridae: lassa virus (LASV), and rhabdoviridae: vesicular stomatitis virus (VSV). Can inhibit cell surface proteolytic activity of MMP14 causing decreased activation of MMP15 which results in inhibition of cell growth and migration. Can stimulate signaling by LILRA4/ILT7 and consequently provide negative feedback to the production of IFN by plasmacytoid dendritic cells in response to viral infection. Plays a role in the organization of the subapical actin cytoskeleton in polarized epithelial cells. The chain is Bone marrow stromal antigen 2 (Bst2) from Cricetulus griseus (Chinese hamster).